A 187-amino-acid polypeptide reads, in one-letter code: Casparian strip membrane protein 1 (187 aa).

The segment covering 1–10 (MKGSSEHGET) has biased composition (basic and acidic residues). Residues 1 to 20 (MKGSSEHGETSKQAPLGSSR) are disordered. At 1-27 (MKGSSEHGETSKQAPLGSSRGVSKGVS) the chain is on the cytoplasmic side. The chain crosses the membrane as a helical span at residues 28–48 (VLDLILRFIAIIGTLASAIAM). At 49 to 75 (GTTNETLPFFTQFIRFKAQYSDLPTLT) the chain is on the extracellular side. Residue Asn52 is glycosylated (N-linked (GlcNAc...) asparagine). A helical transmembrane segment spans residues 76–96 (FFVVANSIVCAYLTLSLPLSI). Residues 97-115 (VHIIRSRAKYSRLLLVVLD) are Cytoplasmic-facing. The chain crosses the membrane as a helical span at residues 116–136 (AAMLALVTPGASAAAAIVYLA). Over 137–162 (HKGNVRANWLAICQQFDSFCERISGC) the chain is Extracellular. Residues 163–183 (LIGSFGAMVMLVLLLLLSAIA) form a helical membrane-spanning segment. Topologically, residues 184 to 187 (LARR) are cytoplasmic.

Belongs to the Casparian strip membrane proteins (CASP) family. As to quaternary structure, homodimer and heterodimers.

The protein resides in the cell membrane. Its function is as follows. Regulates membrane-cell wall junctions and localized cell wall deposition. Required for establishment of the Casparian strip membrane domain (CSD) and the subsequent formation of Casparian strips, a cell wall modification of the root endodermis that determines an apoplastic barrier between the intraorganismal apoplasm and the extraorganismal apoplasm and prevents lateral diffusion. This Zea mays (Maize) protein is Casparian strip membrane protein 1.